Consider the following 713-residue polypeptide: G-protein coupled receptor-associated protein LMBRD2 (713 aa).

Over 1–3 (MSG) the chain is Extracellular. Residues 4 to 21 (VALGIEIVSVFFLALFLL) traverse the membrane as a helical segment. Over 22 to 32 (HRYGDFKKQHK) the chain is Cytoplasmic. A helical membrane pass occupies residues 33 to 53 (LVIVGTLLAWYLCFLIVFIIP). The Extracellular portion of the chain corresponds to 54 to 122 (LDVSTTIYNR…SKPWSYIPRG (69 aa)). 2 N-linked (GlcNAc...) asparagine glycosylation sites follow: Asn76 and Asn89. Residues 123-143 (IMPIFWRVVYWTSQFLTWILM) form a helical membrane-spanning segment. The Cytoplasmic portion of the chain corresponds to 144 to 167 (PFMQSYARSGGFSITGKIKTALIE). The chain crosses the membrane as a helical span at residues 168-188 (NAIYYGTYLLIFGALLIYVAV). Residues 189-203 (NPNLHLEWYQLQTIG) are Extracellular-facing. A helical transmembrane segment spans residues 204-224 (IAAANTWGLFLLVLLMGYGLV). Residues 225–404 (EIPRSQWNGA…ECLLRPWCSR (180 aa)) lie on the Cytoplasmic side of the membrane. Positions 246 to 314 (KAAKLMTEKA…DDYEDFEEKN (69 aa)) form a coiled coil. The chain crosses the membrane as a helical span at residues 405 to 425 (ILAVILALFSTVVVWSECTFF). Residues 426-449 (SAKPVLSLFAVFIQQAEQTHNYIY) lie on the Extracellular side of the membrane. A helical membrane pass occupies residues 450 to 470 (VEVVCFLSIFFLSICVYSTVF). Over 471–490 (RIRVFNYYYLASHHQTDAYS) the chain is Cytoplasmic. A helical transmembrane segment spans residues 491–511 (LLFSGMLFCRLTPPLCLNFLG). The Extracellular portion of the chain corresponds to 512–538 (LTHMDVSISHQNIEPTAYTSIMGSLRV). Residues 539–559 (LPLIADVFYIYYPMLVLILCI) traverse the membrane as a helical segment. The Cytoplasmic segment spans residues 560-713 (ATYFSLGTRC…QSNSRIFDDV (154 aa)). Residues 587-620 (DLTDEGKELIKREKRKRQRLEDGETRRREWKERY) are a coiled coil. Residues 600–713 (KRKRQRLEDG…QSNSRIFDDV (114 aa)) form a disordered region. Over residues 605-629 (RLEDGETRRREWKERYPTNREDTSR) the composition is skewed to basic and acidic residues. Positions 643–657 (TEMTTNRSSKYTRAS) are enriched in polar residues. The segment covering 658 to 667 (NRTERDRIEL) has biased composition (basic and acidic residues). The span at 701–713 (SMSQSNSRIFDDV) shows a compositional bias: polar residues.

The protein belongs to the LIMR family.

It localises to the cell membrane. Its function is as follows. May associate with G-protein coupled receptors and regulate downstream signaling pathways. The chain is G-protein coupled receptor-associated protein LMBRD2 (lmbrd2) from Xenopus laevis (African clawed frog).